Reading from the N-terminus, the 429-residue chain is Glucose-1-phosphate adenylyltransferase (429 aa).

Alpha-D-glucose 1-phosphate is bound by residues Gly-162, 177–178, and Ser-209; that span reads EK.

Belongs to the bacterial/plant glucose-1-phosphate adenylyltransferase family. In terms of assembly, homotetramer.

It catalyses the reaction alpha-D-glucose 1-phosphate + ATP + H(+) = ADP-alpha-D-glucose + diphosphate. Its pathway is glycan biosynthesis; glycogen biosynthesis. Involved in the biosynthesis of ADP-glucose, a building block required for the elongation reactions to produce glycogen. Catalyzes the reaction between ATP and alpha-D-glucose 1-phosphate (G1P) to produce pyrophosphate and ADP-Glc. This Nostoc punctiforme (strain ATCC 29133 / PCC 73102) protein is Glucose-1-phosphate adenylyltransferase.